A 716-amino-acid polypeptide reads, in one-letter code: Fatty acid oxidation complex subunit alpha (716 aa).

An enoyl-CoA hydratase/isomerase region spans residues 1–189 (MIYQSPTIQV…KVGAVDAVVA (189 aa)). Asp-296 serves as a coordination point for substrate. Residues 311-716 (KEVNNAAVLG…AANNGSYYQA (406 aa)) are 3-hydroxyacyl-CoA dehydrogenase. Residues Met-324, Asp-343, 400–402 (VVE), Lys-407, and Ser-429 contribute to the NAD(+) site. The active-site For 3-hydroxyacyl-CoA dehydrogenase activity is the His-450. Asn-453 contributes to the NAD(+) binding site. Substrate contacts are provided by Asn-500 and Tyr-660.

The protein in the N-terminal section; belongs to the enoyl-CoA hydratase/isomerase family. This sequence in the C-terminal section; belongs to the 3-hydroxyacyl-CoA dehydrogenase family. Heterotetramer of two alpha chains (FadB) and two beta chains (FadA).

The enzyme catalyses a (3S)-3-hydroxyacyl-CoA + NAD(+) = a 3-oxoacyl-CoA + NADH + H(+). The catalysed reaction is a (3S)-3-hydroxyacyl-CoA = a (2E)-enoyl-CoA + H2O. It catalyses the reaction a 4-saturated-(3S)-3-hydroxyacyl-CoA = a (3E)-enoyl-CoA + H2O. It carries out the reaction (3S)-3-hydroxybutanoyl-CoA = (3R)-3-hydroxybutanoyl-CoA. The enzyme catalyses a (3Z)-enoyl-CoA = a 4-saturated (2E)-enoyl-CoA. The catalysed reaction is a (3E)-enoyl-CoA = a 4-saturated (2E)-enoyl-CoA. It functions in the pathway lipid metabolism; fatty acid beta-oxidation. In terms of biological role, involved in the aerobic and anaerobic degradation of long-chain fatty acids via beta-oxidation cycle. Catalyzes the formation of 3-oxoacyl-CoA from enoyl-CoA via L-3-hydroxyacyl-CoA. It can also use D-3-hydroxyacyl-CoA and cis-3-enoyl-CoA as substrate. This is Fatty acid oxidation complex subunit alpha from Shewanella baltica (strain OS155 / ATCC BAA-1091).